A 534-amino-acid chain; its full sequence is Probable protein kinase UbiB (534 aa).

The helical transmembrane segment at 23-43 threads the bilayer; that stretch reads DLLFDLPLPWFLLALRFALPW. Residues 125–492 form the Protein kinase domain; that stretch reads RFDIEPLASA…WHKRKDDWFL (368 aa). ATP-binding positions include 131–139 and Lys-153; that span reads LASASVAQV. Residue Asp-288 is the Proton acceptor of the active site. 2 helical membrane-spanning segments follow: residues 490-510 and 512-532; these read WFLR…AAGG and LHEL…YLIV.

This sequence belongs to the ABC1 family. UbiB subfamily.

It localises to the cell inner membrane. The protein operates within cofactor biosynthesis; ubiquinone biosynthesis [regulation]. In terms of biological role, is probably a protein kinase regulator of UbiI activity which is involved in aerobic coenzyme Q (ubiquinone) biosynthesis. The sequence is that of Probable protein kinase UbiB from Pseudomonas fluorescens (strain ATCC BAA-477 / NRRL B-23932 / Pf-5).